We begin with the raw amino-acid sequence, 209 residues long: Mitochondrial import inner membrane translocase subunit Tim23 (209 aa).

3 consecutive transmembrane segments (helical) span residues 73 to 93, 125 to 145, and 181 to 197; these read FELAFFTIGGCCMTGAAFGAM, ALWANTLGSLALLYSAFGVII, and GLAGLTLTSLYALYNNW.

The protein belongs to the Tim17/Tim22/Tim23 family. Component of the TIM23 complex at least composed of TIMM23, TIMM17 (TIMM17A or TIMM17B) and TIMM50; within this complex, directly interacts with TIMM50. The complex interacts with the TIMM44 component of the PAM complex and with DNAJC15. Upon mitochondrial depolarization, interacts with PINK1; the interaction is required for PINK1 accumulation at the outer mitochondrial membrane, kinase activation by autophosphorylation and PRKN recruitement to mitochondria.

Its subcellular location is the mitochondrion inner membrane. In terms of biological role, essential component of the TIM23 complex, a complex that mediates the translocation of transit peptide-containing proteins across the mitochondrial inner membrane. Has a role in the activation of stress-induced mitophagy by protecting PINK1 from OMA1-mediated degradation and facilitating its accumulation at the outer mitochondrial membrane in response to depolarization. The polypeptide is Mitochondrial import inner membrane translocase subunit Tim23 (Timm23) (Mus musculus (Mouse)).